Consider the following 356-residue polypeptide: NF-kappa-B inhibitor beta (356 aa).

Phosphoserine; by RPS6KA1 occurs at positions 19 and 23. 3 ANK repeats span residues D57 to Y86, L93 to V122, and R126 to R155. The tract at residues P149 to E193 is disordered. S183 bears the Phosphoserine mark. The span at S183–E193 shows a compositional bias: acidic residues. ANK repeat units lie at residues E206–K235, C240–A269, and G273–E302. A disordered region spans residues A298–V356. S313 and S315 each carry phosphoserine; by CK2. A compositionally biased stretch (acidic residues) spans D318 to D328.

This sequence belongs to the NF-kappa-B inhibitor family. As to quaternary structure, interacts with THRB (via ligand-binding domain). Interacts with RELA and REL. Interacts with COMMD1. Interacts with inhibitor kappa B-interacting Ras-like NKIRAS1 and NKIRAS2. Post-translationally, phosphorylated by RPS6KA1; followed by degradation. Interaction with NKIRAS1 and NKIRAS2 probably prevents phosphorylation. Expressed in all tissues examined.

The protein localises to the cytoplasm. Its subcellular location is the nucleus. Inhibits NF-kappa-B by complexing with and trapping it in the cytoplasm. However, the unphosphorylated form resynthesized after cell stimulation is able to bind NF-kappa-B allowing its transport to the nucleus and protecting it to further NFKBIA-dependent inactivation. Association with inhibitor kappa B-interacting NKIRAS1 and NKIRAS2 prevent its phosphorylation rendering it more resistant to degradation, explaining its slower degradation. This Homo sapiens (Human) protein is NF-kappa-B inhibitor beta (NFKBIB).